Here is a 258-residue protein sequence, read N- to C-terminus: Ubiquinone/menaquinone biosynthesis C-methyltransferase UbiE (258 aa).

S-adenosyl-L-methionine-binding positions include threonine 83, aspartate 104, and 130–131 (DA).

The protein belongs to the class I-like SAM-binding methyltransferase superfamily. MenG/UbiE family.

The enzyme catalyses a 2-demethylmenaquinol + S-adenosyl-L-methionine = a menaquinol + S-adenosyl-L-homocysteine + H(+). It catalyses the reaction a 2-methoxy-6-(all-trans-polyprenyl)benzene-1,4-diol + S-adenosyl-L-methionine = a 5-methoxy-2-methyl-3-(all-trans-polyprenyl)benzene-1,4-diol + S-adenosyl-L-homocysteine + H(+). Its pathway is quinol/quinone metabolism; menaquinone biosynthesis; menaquinol from 1,4-dihydroxy-2-naphthoate: step 2/2. It functions in the pathway cofactor biosynthesis; ubiquinone biosynthesis. Methyltransferase required for the conversion of demethylmenaquinol (DMKH2) to menaquinol (MKH2) and the conversion of 2-polyprenyl-6-methoxy-1,4-benzoquinol (DDMQH2) to 2-polyprenyl-3-methyl-6-methoxy-1,4-benzoquinol (DMQH2). The sequence is that of Ubiquinone/menaquinone biosynthesis C-methyltransferase UbiE from Bordetella bronchiseptica (strain ATCC BAA-588 / NCTC 13252 / RB50) (Alcaligenes bronchisepticus).